The following is a 168-amino-acid chain: mRNA stability protein IGO1 (168 aa).

The span at 1-13 (MSNENLSPNSSNP) shows a compositional bias: low complexity. Residues 1–31 (MSNENLSPNSSNPDLTKLNNGESGTIDTSKF) are disordered. Over residues 17 to 31 (KLNNGESGTIDTSKF) the composition is skewed to polar residues. 2 positions are modified to phosphoserine: serine 32 and serine 64. The tract at residues 125–168 (KEGSISSGPPSSNNGTIGGGSTSSTPVGNHSSSSSSLYTESPIR) is disordered. Composition is skewed to low complexity over residues 127 to 139 (GSIS…SNNG) and 146 to 168 (TSST…SPIR).

This sequence belongs to the endosulfine family. Interacts with RIM15, DHH1, PBP1, PBP4 and LSM12. Post-translationally, phosphorylated at Ser-64 by RIM15.

Functionally, required for TORC1 to properly control gene expression and chronological life span. Plays an essential role in initiation of the G0 program by preventing the degradation of specific nutrient-regulated mRNAs via the 5'-3' mRNA decay pathway. This is mRNA stability protein IGO1 (IGO1) from Saccharomyces cerevisiae (strain ATCC 204508 / S288c) (Baker's yeast).